Here is a 390-residue protein sequence, read N- to C-terminus: Transforming protein cbl (390 aa).

The segment at 1 to 52 (ASAGGGCRRGPSFSPGSIPSLAAERAPDPPLAMAGNVKKSSGAGGGGSGGSG) is disordered. The span at 42–52 (GAGGGGSGGSG) shows a compositional bias: gly residues. Residues 77–205 (PPCTVDKKMV…KGIFPSGLFQ (129 aa)) form a 4H region. In terms of domain architecture, Cbl-PTB spans 77 to 381 (PPCTVDKKMV…GRNQNPDLTG (305 aa)). The interval 206 to 278 (GDTFRITKAD…FEFDIFTRLF (73 aa)) is EF-hand-like. Ca(2+)-binding residues include D259, T261, N263, Y265, and E270. The segment at 279–381 (QPWSSLLRNW…GRNQNPDLTG (103 aa)) is SH2-like. A 4-O-phospho-L-tyrosine-binding site is contributed by R324.

Its function is as follows. Induces early B-lineage lymphomas. The chain is Transforming protein cbl (V-CBL) from Mus musculus (Mouse).